A 165-amino-acid chain; its full sequence is Putative BTB/POZ domain-containing protein At2g40440 (165 aa).

Positions 24 to 98 (VDVRLKAGDS…IYSDGSMLSA (75 aa)) constitute a BTB domain.

The protein operates within protein modification; protein ubiquitination. Its function is as follows. May act as a substrate-specific adapter of an E3 ubiquitin-protein ligase complex (CUL3-RBX1-BTB) which mediates the ubiquitination and subsequent proteasomal degradation of target proteins. This Arabidopsis thaliana (Mouse-ear cress) protein is Putative BTB/POZ domain-containing protein At2g40440.